We begin with the raw amino-acid sequence, 502 residues long: tRNA-2-methylthio-N(6)-dimethylallyladenosine synthase (502 aa).

One can recognise an MTTase N-terminal domain in the interval 12-129 (RTYQVRTYGC…LPVLLERARH (118 aa)). Residues cysteine 21, cysteine 58, cysteine 92, cysteine 166, cysteine 170, and cysteine 173 each contribute to the [4Fe-4S] cluster site. Positions 152–383 (RESTYAGWVS…ACVEEITWAE (232 aa)) constitute a Radical SAM core domain. Positions 385-455 (RRLVGETVEV…PHHLNADGEP (71 aa)) constitute a TRAM domain. Residues 451 to 502 (ADGEPLAHRRTPAGDAAEAGRRPRTAGVSLGLPTVGAPPSPVPPAASSACAC) form a disordered region.

The protein belongs to the methylthiotransferase family. MiaB subfamily. In terms of assembly, monomer. [4Fe-4S] cluster serves as cofactor.

Its subcellular location is the cytoplasm. The enzyme catalyses N(6)-dimethylallyladenosine(37) in tRNA + (sulfur carrier)-SH + AH2 + 2 S-adenosyl-L-methionine = 2-methylsulfanyl-N(6)-dimethylallyladenosine(37) in tRNA + (sulfur carrier)-H + 5'-deoxyadenosine + L-methionine + A + S-adenosyl-L-homocysteine + 2 H(+). Functionally, catalyzes the methylthiolation of N6-(dimethylallyl)adenosine (i(6)A), leading to the formation of 2-methylthio-N6-(dimethylallyl)adenosine (ms(2)i(6)A) at position 37 in tRNAs that read codons beginning with uridine. The polypeptide is tRNA-2-methylthio-N(6)-dimethylallyladenosine synthase (Salinispora arenicola (strain CNS-205)).